Here is a 211-residue protein sequence, read N- to C-terminus: Endo-1,4-beta-xylanase A (211 aa).

An N-terminal signal peptide occupies residues 1-27 (MKVTAAFAGLLVTAFAAPVPEPVLVSR). The GH11 domain occupies 28–210 (SAGINYVQNY…GAGSASVTIS (183 aa)). Residue Glu-106 is the Nucleophile of the active site. Cys-119 and Cys-138 are disulfide-bonded. The active-site Proton donor is Glu-197.

It belongs to the glycosyl hydrolase 11 (cellulase G) family.

It is found in the secreted. It catalyses the reaction Endohydrolysis of (1-&gt;4)-beta-D-xylosidic linkages in xylans.. Its pathway is glycan degradation; xylan degradation. Functionally, endo-1,4-beta-xylanase involved in the hydrolysis of xylan, a major structural heterogeneous polysaccharide found in plant biomass representing the second most abundant polysaccharide in the biosphere, after cellulose. The protein is Endo-1,4-beta-xylanase A (xynA) of Aspergillus niger.